The primary structure comprises 21 residues: Tricyclic peptide MS-271 (21 aa).

Positions C1 to D9 form a cross-link, 3-cysteinyl-aspartic acid (Cys-Asp). 2 disulfide bridges follow: C1–C13 and C7–C19. W21 carries the D-tryptophan modification.

Its function is as follows. Inhibits chicken myosin light chain kinase with an IC(50) of 8 M. Does not inhibit bovine cAMP-dependent protein kinase or rat protein kinase C. Antibacterial activity against the Gram-positive bacteria B.subtilis, E.faecium and S.aureus. No antibacterial activity against the Gram-negative bacteria E.coli, K.pneumoniae, P.aeruginosa, P.vulgaris, S.sonnei and S.typhosa. No antifungal activity against C.albicans. The protein is Tricyclic peptide MS-271 of Streptomyces sp.